A 37-amino-acid chain; its full sequence is Large ribosomal subunit protein bL36 (37 aa).

Belongs to the bacterial ribosomal protein bL36 family.

This is Large ribosomal subunit protein bL36 from Geobacter metallireducens (strain ATCC 53774 / DSM 7210 / GS-15).